Consider the following 286-residue polypeptide: Protein HEAT-STRESS-ASSOCIATED 32 (286 aa).

It belongs to the phosphosulfolactate synthase family.

Functionally, transactivator required, together with HSP101, for long-term acquired thermotolerance (LAT) maintenance, probably by regulating heat-inducible genes expression, thus being a cellular component of thermomemory. The chain is Protein HEAT-STRESS-ASSOCIATED 32 from Arabidopsis thaliana (Mouse-ear cress).